We begin with the raw amino-acid sequence, 1186 residues long: Pumilio homolog 1 (1186 aa).

Ser-2 carries the post-translational modification N-acetylserine. Residue Ser-19 is modified to Phosphoserine. The tract at residues 22–73 (LKHHPQEPANPNMPVVLTSGTGSQAQPQPAANQALAAGTHSSPVPGSIGVAG) is disordered. Residues 45-58 (QAQPQPAANQALAA) show a composition bias toward low complexity. Phosphoserine is present on residues Ser-75, Ser-98, and Ser-106. A Phosphothreonine modification is found at Thr-112. Residues Ser-124, Ser-159, Ser-197, Ser-209, and Ser-229 each carry the phosphoserine modification. Residues 233 to 272 (SCLRKGGFGPRDADSDENDKGEKKNKGTFDGDKLGDLKEE) form a disordered region. A compositionally biased stretch (basic and acidic residues) spans 250–272 (NDKGEKKNKGTFDGDKLGDLKEE). Ser-305 bears the Phosphoserine mark. Residues 485-502 (TNSANQQTTPQAQQGQQQ) are compositionally biased toward low complexity. Disordered stretches follow at residues 485–524 (TNSA…GQQT) and 613–648 (AGTT…FYGN). The span at 511–524 (RPLTPNQNQQGQQT) shows a compositional bias: polar residues. Thr-514 carries the post-translational modification Phosphothreonine. The span at 626-639 (QQPQPQPQQQPNNN) shows a compositional bias: low complexity. Phosphoserine is present on residues Ser-709 and Ser-714. Residues 742 to 775 (GPVGMPLPSQGPGHSQTPPPSLSSHGSSSSLNLG) form a disordered region. Residues 763–775 (LSSHGSSSSLNLG) are compositionally biased toward low complexity. The residue at position 796 (Arg-796) is an Omega-N-methylarginine. Residues Ser-806 and Ser-822 each carry the phosphoserine modification. The PUM-HD domain maps to 828-1168 (GRSRLLEDFR…HILAKLEKYY (341 aa)). 8 Pumilio repeats span residues 848-883 (EIAG…LVFN), 884-919 (EILQ…ALAE), 920-955 (RIRG…EMVR), 956-991 (ELDG…FIID), 992-1027 (AFKG…PILE), 1028-1063 (ELHQ…KIVA), 1064-1099 (EIRG…VLID), and 1103-1142 (TMND…IVMH). Residues 863–867 (SRFIQ) form an adenine-nucleotide binding in RNA target region. The segment at 899-903 (NYVIQ) is uracil-nucleotide binding in RNA target. The tract at residues 935-939 (CRVIQ) is adenine-nucleotide binding in RNA target. Positions 971–975 (NHVVQ) are non-specific-nucleotide binding in RNA target. The adenine-nucleotide binding in RNA target stretch occupies residues 1007–1011 (CRVIQ). The interval 1043 to 1047 (NYVIQ) is uracil-nucleotide binding in RNA target. 2 guanine-nucleotide binding in RNA target regions span residues 1079-1083 (SNVVE) and 1080-1083 (NVVE). A uracil-nucleotide binding in RNA target region spans residues 1122–1126 (NYVVQ).

In terms of assembly, recruits the CCR4-POP2-NOT deadenylase leading to translational inhibition and mRNA degradation. Interacts with TRIM71 (via NHL repeats) in an RNA-dependent manner. In terms of processing, phosphorylation at Ser-714 promotes RNA-binding activity. Following growth factor stimulation phosphorylated at Ser-714, promoting binding to the 3'-UTR of CDKN1B/p27 mRNA.

Its subcellular location is the cytoplasm. It localises to the P-body. It is found in the cytoplasmic granule. Its function is as follows. Sequence-specific RNA-binding protein that acts as a post-transcriptional repressor by binding the 3'-UTR of mRNA targets. Binds to an RNA consensus sequence, the Pumilio Response Element (PRE), 5'-UGUANAUA-3', that is related to the Nanos Response Element (NRE). Mediates post-transcriptional repression of transcripts via different mechanisms: acts via direct recruitment of the CCR4-POP2-NOT deadenylase leading to translational inhibition and mRNA degradation. Also mediates deadenylation-independent repression by promoting accessibility of miRNAs. Following growth factor stimulation, phosphorylated and binds to the 3'-UTR of CDKN1B/p27 mRNA, inducing a local conformational change that exposes miRNA-binding sites, promoting association of miR-221 and miR-222, efficient suppression of CDKN1B/p27 expression, and rapid entry to the cell cycle. Acts as a post-transcriptional repressor of E2F3 mRNAs by binding to its 3'-UTR and facilitating miRNA regulation. Represses a program of genes necessary to maintain genomic stability such as key mitotic, DNA repair and DNA replication factors. Its ability to repress those target mRNAs is regulated by the lncRNA NORAD (non-coding RNA activated by DNA damage) which, due to its high abundance and multitude of PUMILIO binding sites, is able to sequester a significant fraction of PUM1 and PUM2 in the cytoplasm. Involved in neuronal functions by regulating ATXN1 mRNA levels: acts by binding to the 3'-UTR of ATXN1 transcripts, leading to their down-regulation independently of the miRNA machinery. Plays a role in cytoplasmic sensing of viral infection. In testis, acts as a post-transcriptional regulator of spermatogenesis by binding to the 3'-UTR of mRNAs coding for regulators of p53/TP53. Involved in embryonic stem cell renewal by facilitating the exit from the ground state: acts by targeting mRNAs coding for naive pluripotency transcription factors and accelerates their down-regulation at the onset of differentiation. Binds specifically to miRNA MIR199A precursor, with PUM2, regulates miRNA MIR199A expression at a postranscriptional level. This Pongo abelii (Sumatran orangutan) protein is Pumilio homolog 1 (PUM1).